The following is a 334-amino-acid chain: MNRNHHDHLDAAGKDMWSRLSDLADKADMLYEREGISKDRKSVSEEEEEKKTRFSILVDLVGRLCDQEERRTLGSSPTKTNTLFEGSEKSHLDHHLDHLPQKPRSSLECFFTRVYTRRNHNNVSTSSSLFNTDEFERTETKSPTIRNSQSSPSSCLMENTKRKRYQSSGKSKKPKFDPFSLTAARETPEWLLDVMRKMKGAEGPIKLIYEKTLTATDVKPSESRLLIPFNKLLRNDFLTPEESRAIAIDKEEEEEDTKKIGVKTIIVNQFSKEWSLRFLIWVMKKKKSGNGTLYYTLNRGWNGVVSGNKLKANDNISLWTFRCGGVLCFALEKE.

Disordered regions lie at residues 69 to 89 and 133 to 178; these read ERRT…GSEK and DEFE…KFDP. Composition is skewed to polar residues over residues 73-84 and 141-157; these read LGSSPTKTNTLF and KSPT…SCLM. Residues 161–173 are compositionally biased toward basic residues; the sequence is KRKRYQSSGKSKK. The TF-B3 DNA-binding region spans 229–334; it reads FNKLLRNDFL…GVLCFALEKE (106 aa).

The protein resides in the nucleus. The sequence is that of Putative B3 domain-containing protein At3g49610 from Arabidopsis thaliana (Mouse-ear cress).